Reading from the N-terminus, the 119-residue chain is Large ribosomal subunit protein bL20 (119 aa).

It belongs to the bacterial ribosomal protein bL20 family.

Binds directly to 23S ribosomal RNA and is necessary for the in vitro assembly process of the 50S ribosomal subunit. It is not involved in the protein synthesizing functions of that subunit. This Rhodopseudomonas palustris (strain BisA53) protein is Large ribosomal subunit protein bL20.